The following is a 309-amino-acid chain: Vomeronasal type-1 receptor 46 (309 aa).

At 1 to 20 (MNKANIFCTDTNMKVILFSE) the chain is on the extracellular side. A helical membrane pass occupies residues 21 to 41 (VSVGISANSILFISHLCMFLG). The Cytoplasmic portion of the chain corresponds to 42–50 (ESRPKPIDL). Residues 51–71 (YIAFFSLTHLMLLVTMGLIAV) traverse the membrane as a helical segment. Over 72-85 (DMFMPGGRWDSTTC) the chain is Extracellular. Cysteines 85 and 171 form a disulfide. Residues 86 to 106 (TFLMYLHIVLRGPTLCATCLL) form a helical membrane-spanning segment. At 107-134 (NVLWTITLSPRNSCLTKFKHKSPHHISG) the chain is on the cytoplasmic side. A helical transmembrane segment spans residues 135–155 (AFLFLCVLYMSLSSELLSITA). Over 156–192 (SLNLTSENFLYVSQSCSILPMSYSIKSMFSTKMAIRE) the chain is Extracellular. The N-linked (GlcNAc...) asparagine glycan is linked to N158. Residues 193–213 (AFLIGLMVLSSGYMVALLWSH) form a helical membrane-spanning segment. The Cytoplasmic portion of the chain corresponds to 214–237 (KKQAQHLHSNSLSLKASPEQRATR). A helical transmembrane segment spans residues 238–258 (TIMLLMSFFVVFYILDSVIFY). At 259 to 267 (SRMKFKDDS) the chain is on the extracellular side. A helical transmembrane segment spans residues 268-288 (IFVCVQIIVSHSYVTVSPFVF). At 289–309 (ICTEKHIIKFFWSLCGRIVNI) the chain is on the cytoplasmic side.

Belongs to the G-protein coupled receptor 1 family.

It localises to the cell membrane. Its function is as follows. Putative pheromone receptor implicated in the regulation of social and reproductive behavior. The sequence is that of Vomeronasal type-1 receptor 46 (Vmn1r46) from Mus musculus (Mouse).